Consider the following 93-residue polypeptide: Small ribosomal subunit protein uS19 (93 aa).

Belongs to the universal ribosomal protein uS19 family.

In terms of biological role, protein S19 forms a complex with S13 that binds strongly to the 16S ribosomal RNA. The sequence is that of Small ribosomal subunit protein uS19 from Nocardia farcinica (strain IFM 10152).